The following is a 2211-amino-acid chain: Coagulation factor V (2211 aa).

Residues 1–28 form the signal peptide; sequence MFLACPGFWVLVVLGSSWAGWGNLGAEA. 4 consecutive Plastocyanin-like domains span residues 30 to 193, 203 to 327, 348 to 525, and 535 to 686; these read KLRQ…LLIC, TQKM…IDIK, KRWE…LLIC, and IQRA…FRDA. 2 consecutive F5/8 type A domains span residues 30 to 327 and 348 to 686; these read KLRQ…IDIK and KRWE…FRDA. Residues D139 and D140 each coordinate Ca(2+). C167 and C193 are disulfide-bonded. N-linked (GlcNAc...) asparagine glycosylation is found at N225, N239, N297, N382, and N460. C248 and C329 are joined by a disulfide. Residues C499 and C525 are joined by a disulfide bond. N-linked (GlcNAc...) asparagine glycans are attached at residues N553 and N587. The cysteines at positions 607 and 688 are disulfide-linked. T644 bears the Phosphothreonine mark. The interval 696–1564 is b; the sequence is SYEIIYEPSG…PDNIAAWYLR (869 aa). 3 positions are modified to sulfotyrosine: Y697, Y701, and Y730. The propeptide at 742–1564 is activation peptide (connecting region); that stretch reads SFRNSSLNQE…PDNIAAWYLR (823 aa). N-linked (GlcNAc...) asparagine glycans are attached at residues N745, N756, N774, and N780. Residues 814-844 are disordered; that stretch reads LEHAGLDKNSALNPPMAEHSSPYSEDPREDH. 3 N-linked (GlcNAc...) asparagine glycosylation sites follow: N902, N952, and N964. A compositionally biased stretch (polar residues) spans 954–969; it reads TVNKLPNSPQNDSRTW. The segment at 954–1039 is disordered; it reads TVNKLPNSPQ…PLSPRSFHPL (86 aa). Over residues 995–1009 the composition is skewed to basic and acidic residues; it reads PLQDRQDRRNSRLKE. N1044, N1053, N1062, N1071, N1078, and N1094 each carry an N-linked (GlcNAc...) asparagine glycan. 2 disordered regions span residues 1084–1162 and 1195–1471; these read SLPD…IPNY and QPSI…FGQT. 2 stretches are compositionally biased toward polar residues: residues 1091-1103 and 1127-1160; these read TSPN…TSSP and THST…SQIP. Repeat copies occupy residues 1124–1137, 1138–1151, 1188–1196, 1197–1205, 1206–1214, 1215–1223, 1224–1232, 1233–1241, 1242–1250, 1251–1259, 1260–1268, 1269–1277, 1278–1286, 1287–1295, 1296–1304, 1305–1313, 1314–1322, 1323–1331, 1332–1340, 1341–1349, 1350–1358, 1359–1367, 1368–1376, 1377–1385, 1386–1394, 1395–1403, 1404–1412, 1413–1421, 1422–1430, and 1431–1439. The tract at residues 1124–1151 is 2 X 14 AA tandem repeats; that stretch reads SDPTHSTTAPSNRSPDPTHSTTAPSNRS. The segment at 1188 to 1453 is 30 X 9 AA approximate tandem repeats of [AS]-L-S-P-D-[LP]-[GS]-Q-[TE]; it reads ATSLDLSQPS…TSPPLDLNQT (266 aa). Polar residues-rich tracts occupy residues 1214–1234, 1241–1252, 1259–1270, 1286–1306, 1313–1324, 1331–1352, 1367–1388, and 1403–1414; these read ESLS…QESL, TALSPDPSQESL, TALS…TSLS, and TALSPDLSQESL. Positions 1422 to 1441 are enriched in low complexity; the sequence is PLSPDLSLESLSPDLSQLDL. One copy of the 2-29; truncated repeat lies at 1440-1444; that stretch reads DLKQT. Over residues 1442-1463 the composition is skewed to polar residues; it reads KQTSPPLDLNQTSHTSESSQSL. The 2-30 repeat unit spans residues 1445 to 1453; that stretch reads SPPLDLNQT. 2 N-linked (GlcNAc...) asparagine glycosylation sites follow: N1451 and N1490. 4 positions are modified to sulfotyrosine: Y1513, Y1529, Y1537, and Y1541. Residues N1550 and N1690 are each glycosylated (N-linked (GlcNAc...) asparagine). Plastocyanin-like domains are found at residues 1569–1738 and 1748–1890; these read NRKY…LLIC and NMPV…FLIV. One can recognise an F5/8 type A 3 domain in the interval 1569–1890; the sequence is NRKYYYIAAE…AGMQTPFLIV (322 aa). The cysteines at positions 1712 and 1738 are disulfide-linked. Positions 1830 and 1832 each coordinate Cu cation. N-linked (GlcNAc...) asparagine glycosylation is present at N1839. D1872 is a binding site for Cu cation. 2 cysteine pairs are disulfide-bonded: C1894-C2048 and C2053-C2208. 2 F5/8 type C domains span residues 1894–2048 and 2053–2208; these read CKMP…LQGC and CSTP…LFGC. 2 N-linked (GlcNAc...) asparagine glycosylation sites follow: N1997 and N2196.

It belongs to the multicopper oxidase family. Factor Va, the activated form of factor V, is composed of a heavy chain and a light chain, non-covalently bound. The interaction between the two chains is calcium-dependent. Forms heterodimer with SERPINA5. Thrombin activates factor V proteolytically to the active cofactor, factor Va (formation of a heavy chain at the N-terminus and a light chain at the C-terminus). In terms of processing, sulfation is required for efficient thrombin cleavage and activation and for full procoagulant activity. Post-translationally, activated protein C inactivates factor V and factor Va by proteolytic degradation.

The protein resides in the secreted. Its activity is regulated as follows. Inhibited by SERPINA5. Functionally, central regulator of hemostasis. It serves as a critical cofactor for the prothrombinase activity of factor Xa that results in the activation of prothrombin to thrombin. The sequence is that of Coagulation factor V (F5) from Bos taurus (Bovine).